A 61-amino-acid polypeptide reads, in one-letter code: LKCHNKLVPFLSKTCPEGKNLCYKMTMLKMPKIPIKRGCTDACPKSSLLVKVVCCNKDKCN.

4 cysteine pairs are disulfide-bonded: Cys-3–Cys-22, Cys-15–Cys-39, Cys-43–Cys-54, and Cys-55–Cys-60.

The protein belongs to the three-finger toxin family. Short-chain subfamily. Type IB cytotoxin sub-subfamily. As to expression, expressed by the venom gland.

It localises to the secreted. Functionally, this protein lyses red blood cells and has cardiotoxic and hypotensive activities. The chain is Cytotoxin 1 from Hemachatus haemachatus (Rinkhals).